The sequence spans 106 residues: N(2)-fixation sustaining protein CowN (106 aa).

Belongs to the CowN family.

Is required to sustain N(2)-dependent growth in the presence of low levels of carbon monoxide (CO). Probably acts by protecting the N(2) fixation ability of the nitrogenase complex, which is inactivated in the presence of CO. This chain is N(2)-fixation sustaining protein CowN, found in Denitrovibrio acetiphilus (strain DSM 12809 / NBRC 114555 / N2460).